A 210-amino-acid chain; its full sequence is Molybdenum cofactor guanylyltransferase (210 aa).

GTP is bound by residues Leu9 to Gly11, Lys21, Asp66, and Asp95. Position 95 (Asp95) interacts with Mg(2+).

This sequence belongs to the MobA family. As to quaternary structure, monomer. Mg(2+) is required as a cofactor.

The protein localises to the cytoplasm. The catalysed reaction is Mo-molybdopterin + GTP + H(+) = Mo-molybdopterin guanine dinucleotide + diphosphate. Transfers a GMP moiety from GTP to Mo-molybdopterin (Mo-MPT) cofactor (Moco or molybdenum cofactor) to form Mo-molybdopterin guanine dinucleotide (Mo-MGD) cofactor. The protein is Molybdenum cofactor guanylyltransferase of Syntrophotalea carbinolica (strain DSM 2380 / NBRC 103641 / GraBd1) (Pelobacter carbinolicus).